Consider the following 307-residue polypeptide: 3-methyl-2-oxobutanoate hydroxymethyltransferase (307 aa).

Mg(2+)-binding residues include Asp-61 and Asp-100. 3-methyl-2-oxobutanoate contacts are provided by residues 61 to 62 (DS), Asp-100, and Lys-130. Mg(2+) is bound at residue Glu-132. Residue Glu-199 is the Proton acceptor of the active site.

This sequence belongs to the PanB family. As to quaternary structure, homodecamer; pentamer of dimers. It depends on Mg(2+) as a cofactor.

It localises to the cytoplasm. The catalysed reaction is 3-methyl-2-oxobutanoate + (6R)-5,10-methylene-5,6,7,8-tetrahydrofolate + H2O = 2-dehydropantoate + (6S)-5,6,7,8-tetrahydrofolate. It functions in the pathway cofactor biosynthesis; (R)-pantothenate biosynthesis; (R)-pantoate from 3-methyl-2-oxobutanoate: step 1/2. In terms of biological role, catalyzes the reversible reaction in which hydroxymethyl group from 5,10-methylenetetrahydrofolate is transferred onto alpha-ketoisovalerate to form ketopantoate. In Nitratidesulfovibrio vulgaris (strain ATCC 29579 / DSM 644 / CCUG 34227 / NCIMB 8303 / VKM B-1760 / Hildenborough) (Desulfovibrio vulgaris), this protein is 3-methyl-2-oxobutanoate hydroxymethyltransferase.